A 170-amino-acid polypeptide reads, in one-letter code: Elicitin-like protein 1 (170 aa).

A signal peptide spans 1–19 (MFSKTLVVLAAVAAVTVNG). 3 disulfide bridges follow: Cys-25/Cys-91, Cys-47/Cys-76, and Cys-71/Cys-118. Residues 122–170 (GGGSTPTTAPPTSTTPTTAPPTGTTPTTAPPAGTTPGVTPSPTTPKPAC) form a disordered region. A compositionally biased stretch (low complexity) spans 126–162 (TPTTAPPTSTTPTTAPPTGTTPTTAPPAGTTPGVTPS).

Belongs to the elicitin family.

Its subcellular location is the secreted. Functionally, induces local and distal defense responses (incompatible hypersensitive reaction) in plants from the solanaceae and cruciferae families. Elicits leaf necrosis and causes the accumulation of pathogenesis-related proteins. Might interact with the lipidic molecules of the plasma membrane. This Pythium oligandrum (Mycoparasitic fungus) protein is Elicitin-like protein 1 (POD-1).